The primary structure comprises 283 residues: MPFVIVSGLSGSGKSTALRTLEDAGFFITDNLPPELWNAMHDLVTARGIENVAVSTDTRTREFLAALEPSYVRLSRRREDLRVLFLEANAEVLLGRYNLSRREHPLGETLMVDFARERELLAPLRGIADTVIDTTDLSAAQLSQRVMHLFRLEHAFTLRLLSFGFKHAPPRDADLVLDVRSLPNPYYDETLRSKSGRQPDVAAYVFRDAEAEQFYGELRHFVQTAAERARASGRHSYTVGIGCTGGQHRSVAVAERLLRELQASSIETELMDHRDMREGGEPT.

8–15 (GLSGSGKS) contacts ATP. 57-60 (DTRT) contributes to the GTP binding site.

Belongs to the RapZ-like family.

Its function is as follows. Displays ATPase and GTPase activities. This Deinococcus radiodurans (strain ATCC 13939 / DSM 20539 / JCM 16871 / CCUG 27074 / LMG 4051 / NBRC 15346 / NCIMB 9279 / VKM B-1422 / R1) protein is Nucleotide-binding protein DR_1434.